Consider the following 153-residue polypeptide: Arginine repressor (153 aa).

Belongs to the ArgR family.

Its subcellular location is the cytoplasm. Its pathway is amino-acid biosynthesis; L-arginine biosynthesis [regulation]. Its function is as follows. Regulates arginine biosynthesis genes. In Clostridium tetani (strain Massachusetts / E88), this protein is Arginine repressor.